A 141-amino-acid chain; its full sequence is Hemoglobin subunit alpha-D (141 aa).

The Globin domain occupies 1–141 (MLTADDKKIL…VAAVLAEKYR (141 aa)). Heme b contacts are provided by histidine 58 and histidine 87.

The protein belongs to the globin family. Heterotetramer of two alpha-D chains and two beta chains. As to expression, red blood cells.

In terms of biological role, involved in oxygen transport from the lung to the various peripheral tissues. The sequence is that of Hemoglobin subunit alpha-D (HBAD) from Branta canadensis (Canada goose).